The primary structure comprises 451 residues: Ribonuclease J (451 aa).

6 residues coordinate Zn(2+): His-84, His-86, Asp-88, His-89, His-155, and Asp-177. 384–388 (HVSGH) provides a ligand contact to substrate. Position 410 (His-410) interacts with Zn(2+).

It belongs to the metallo-beta-lactamase superfamily. RNA-metabolizing metallo-beta-lactamase-like family. Archaeal RNase J subfamily. As to quaternary structure, homodimer. The cofactor is Zn(2+).

It localises to the cytoplasm. With respect to regulation, inhibited by 1,10-phenanthroline. Functionally, a highly processive 5'-3' exoribonuclease; no evidence has been seen for endonuclease activity. Prefers 5'-phosphate or 5'-hydroxyl ends; 5'-triphosphate substrates are very poorly degraded, does not degrade circular RNA. Does not degrade pre-tRNA(Trp) suggesting it is inhibited by strong secondary structures. Also degrades ssNDA but not dsDNA. This chain is Ribonuclease J, found in Pyrococcus abyssi (strain GE5 / Orsay).